We begin with the raw amino-acid sequence, 260 residues long: Ribosomal RNA small subunit methyltransferase A (260 aa).

The S-adenosyl-L-methionine site is built by leucine 23, glycine 48, glutamate 69, aspartate 94, and asparagine 110.

The protein belongs to the class I-like SAM-binding methyltransferase superfamily. rRNA adenine N(6)-methyltransferase family. RsmA subfamily.

It localises to the cytoplasm. The catalysed reaction is adenosine(1518)/adenosine(1519) in 16S rRNA + 4 S-adenosyl-L-methionine = N(6)-dimethyladenosine(1518)/N(6)-dimethyladenosine(1519) in 16S rRNA + 4 S-adenosyl-L-homocysteine + 4 H(+). In terms of biological role, specifically dimethylates two adjacent adenosines (A1518 and A1519) in the loop of a conserved hairpin near the 3'-end of 16S rRNA in the 30S particle. May play a critical role in biogenesis of 30S subunits. This is Ribosomal RNA small subunit methyltransferase A from Thermotoga petrophila (strain ATCC BAA-488 / DSM 13995 / JCM 10881 / RKU-1).